A 283-amino-acid polypeptide reads, in one-letter code: Bifunctional protein FolD (283 aa).

Residues 165 to 167, Ser-190, and Val-231 each bind NADP(+); that span reads GRS.

It belongs to the tetrahydrofolate dehydrogenase/cyclohydrolase family. Homodimer.

It catalyses the reaction (6R)-5,10-methylene-5,6,7,8-tetrahydrofolate + NADP(+) = (6R)-5,10-methenyltetrahydrofolate + NADPH. It carries out the reaction (6R)-5,10-methenyltetrahydrofolate + H2O = (6R)-10-formyltetrahydrofolate + H(+). The protein operates within one-carbon metabolism; tetrahydrofolate interconversion. Functionally, catalyzes the oxidation of 5,10-methylenetetrahydrofolate to 5,10-methenyltetrahydrofolate and then the hydrolysis of 5,10-methenyltetrahydrofolate to 10-formyltetrahydrofolate. The chain is Bifunctional protein FolD from Anoxybacillus flavithermus (strain DSM 21510 / WK1).